The primary structure comprises 59 residues: Dimethylamine corrinoid protein (59 aa).

Positions 1–59 (TLQGQKDVIELLKEEGLRDKIKVMVGGAPATQAWADKIGADCYAENASEAVAKAKELLA) constitute a B12-binding domain.

Belongs to the methylamine corrinoid protein family.

It functions in the pathway one-carbon metabolism; methanogenesis from dimethylamine. Acts as a methyl group carrier between MtbB and MtbA. The polypeptide is Dimethylamine corrinoid protein (mtbC) (Methanosarcina thermophila).